The primary structure comprises 396 residues: Unsaturated chondroitin disaccharide hydrolase (396 aa).

Aspartate 113 (nucleophile) is an active-site residue. The substrate site is built by aspartate 113, aspartate 173, glycine 231, threonine 233, arginine 245, tryptophan 249, serine 363, and serine 366. Residue aspartate 173 is the Proton donor of the active site.

Belongs to the glycosyl hydrolase 88 family. In terms of assembly, monomer.

The catalysed reaction is beta-D-4-deoxy-Delta(4)-GlcpA-(1-&gt;3)-beta-D-GalpNAc6S + H2O = N-acetyl-beta-D-galactosamine 6-sulfate + 5-dehydro-4-deoxy-D-glucuronate. Functionally, catalyzes the hydrolysis of unsaturated hyaluronate and chondroitin disaccharides. Also degrades unsaturated heparin disaccharides. Releases 4-deoxy-4,5-didehydro D-glucuronic acid or 4-deoxy-4,5-didehydro L-iduronic acid from chondroitin disaccharides, hyaluronan disaccharides and heparin disaccharides and cleaves both glycosidic (1-&gt;3) and (1-&gt;4) bonds. Prefers sulfated glycosaminoglycans compared to unsulfated glycosaminoglycans. Probably required for mammalian cells invasion through the degradation of extracellular sulfated glycosaminoglycans such as chondroitin and hyaluronan. The polypeptide is Unsaturated chondroitin disaccharide hydrolase (ugl) (Streptococcus pneumoniae (strain ATCC BAA-255 / R6)).